We begin with the raw amino-acid sequence, 253 residues long: Tetraspanin-11 (253 aa).

4 helical membrane-spanning segments follow: residues 19–39, 63–83, 93–113, and 220–240; these read LLFI…AVGI, VLIF…GAII, YFCL…LAHV, and LLLM…GMVL.

The protein belongs to the tetraspanin (TM4SF) family.

It localises to the membrane. The chain is Tetraspanin-11 (Tspan11) from Rattus norvegicus (Rat).